Here is a 533-residue protein sequence, read N- to C-terminus: Flavin-containing monooxygenase 5 (533 aa).

Arg5 is subject to Dimethylated arginine. FAD is bound by residues 10 to 14 (GAGAS), Glu33, and 41 to 42 (LW). Phosphoserine is present on Ser54. At Tyr56 the chain carries Phosphotyrosine. Ser58 carries the post-translational modification Phosphoserine. An FAD-binding site is contributed by 62 to 63 (NT). 196–199 (SGGD) contacts NADP(+). Residue Ser280 is modified to Phosphoserine. Phosphothreonine is present on Thr284. Ser401 is modified (phosphoserine). The chain crosses the membrane as a helical span at residues 513–533 (MMTMGKFMLAIAFLAIAVVYF).

It belongs to the FMO family. FAD serves as cofactor. Kidney and liver.

It localises to the microsome membrane. It is found in the endoplasmic reticulum membrane. The enzyme catalyses N,N-dimethylaniline + NADPH + O2 + H(+) = N,N-dimethylaniline N-oxide + NADP(+) + H2O. It catalyses the reaction NADPH + O2 + H(+) = H2O2 + NADP(+). It carries out the reaction heptan-2-one + NADPH + O2 + H(+) = pentyl acetate + NADP(+) + H2O. The catalysed reaction is octan-3-one + NADPH + O2 + H(+) = pentyl propanoate + NADP(+) + H2O. The enzyme catalyses octan-3-one + NADPH + O2 + H(+) = ethyl hexanoate + NADP(+) + H2O. It catalyses the reaction hexan-3-one + NADPH + O2 + H(+) = ethyl butanoate + NADP(+) + H2O. It carries out the reaction hexan-3-one + NADPH + O2 + H(+) = propyl propanoate + NADP(+) + H2O. The catalysed reaction is heptan-4-one + NADPH + O2 + H(+) = propyl butanoate + NADP(+) + H2O. The enzyme catalyses (2E)-geranial + NADPH + O2 + H(+) = (1E)-2,6-dimethylhepta-1,5-dien-1-yl formate + NADP(+) + H2O. It catalyses the reaction sulcatone + NADPH + O2 + H(+) = 4-methylpent-3-en-1-yl acetate + NADP(+) + H2O. Acts as a Baeyer-Villiger monooxygenase on a broad range of substrates. Catalyzes the insertion of an oxygen atom into a carbon-carbon bond adjacent to a carbonyl, which converts ketones to esters. Active on diverse carbonyl compounds, whereas soft nucleophiles are mostly non- or poorly reactive. In contrast with other forms of FMO it is non- or poorly active on 'classical' substrates such as drugs, pesticides, and dietary components containing soft nucleophilic heteroatoms. Able to oxidize drug molecules bearing a carbonyl group on an aliphatic chain, such as nabumetone and pentoxifylline. Also, in the absence of substrates, shows slow but yet significant NADPH oxidase activity. Acts as a positive modulator of cholesterol biosynthesis as well as glucose homeostasis, promoting metabolic aging via pleiotropic effects. In Oryctolagus cuniculus (Rabbit), this protein is Flavin-containing monooxygenase 5 (FMO5).